Reading from the N-terminus, the 451-residue chain is Midnolin-B (451 aa).

The Ubiquitin-like domain occupies 20–94 (MNLNIQSTTG…LTLLPSVEAG (75 aa)). Disordered stretches follow at residues 187 to 254 (ASCT…RSRK), 331 to 372 (RNAK…QTEN), and 388 to 427 (QKRL…EGSL). Composition is skewed to low complexity over residues 190–205 (TPGS…TSST), 237–250 (STRG…SPSS), and 336–347 (TSPQSTGPQQTT). A compositionally biased stretch (basic and acidic residues) spans 363–372 (SGDRLRQTEN). Basic residues predominate over residues 388–397 (QKRLRRKARR). Over residues 413-426 (RTSSNSSTSSGEGS) the composition is skewed to low complexity.

It is found in the nucleus. It localises to the cytoplasm. Its subcellular location is the cytosol. The protein resides in the nucleolus. In terms of biological role, facilitates ubiquitin-independent proteasomal degradation of polycomb protein CBX4. Plays a role in inhibiting the activity of glucokinase GCK and both glucose-induced and basal insulin secretion. This Xenopus laevis (African clawed frog) protein is Midnolin-B (midn-b).